Reading from the N-terminus, the 113-residue chain is Phosphoribosyl-ATP pyrophosphatase (113 aa).

It belongs to the PRA-PH family.

It localises to the cytoplasm. The catalysed reaction is 1-(5-phospho-beta-D-ribosyl)-ATP + H2O = 1-(5-phospho-beta-D-ribosyl)-5'-AMP + diphosphate + H(+). Its pathway is amino-acid biosynthesis; L-histidine biosynthesis; L-histidine from 5-phospho-alpha-D-ribose 1-diphosphate: step 2/9. The polypeptide is Phosphoribosyl-ATP pyrophosphatase (Janthinobacterium sp. (strain Marseille) (Minibacterium massiliensis)).